We begin with the raw amino-acid sequence, 676 residues long: MVQTHSEVKRVEELRRLLQQASYAYYVLDAPVMEDAVYDQLYRELQQLEIQHPELVTPDSPTQRIGERPATQFLSVRHNIPLYSLENAFNVEELQAWDQRWRRQVAPTEAEYVAELKIDGSAIALTYENGILVRGATRGDGVTGEDITQNVRTIRSIPLRLSFDGIENIGKVEVRGEAFLPLEVFKQINEERQKAGEQLFANPRNAAAGTLRQLDSKIVARRRLDFFAYTLHISGMDDASIANTQWEALELLQKMGFRVNSQHQLCQSLAEVADYYRYWDTERLNLPYMTDGVVLKLNSFKLQEQLGFTQRFPRWAVALKYPAEEAPTRVENIAVNVGRTGALTPLAQMRPVQLAGTTVSRATLHNSDRIAQLDIRIGDTVIVRKAGEIIPEVVRVLKELRPVDTQPFIMPTHCPVCGQPVVRETGEAVTRCVNASCAAILKGSIEHWVSRDALDIKGVGEKLVHQLVDKELVHSVADLYSLTNEQLFVLERMGEKSAQKLIEAIAQSKNQPWSRVLYGLGIRHVGSVNAQLLSEKYRAVAELSSAKQSDIAGIYGIGAEIAQSVYQWFRISANQRLIERLQAAGLQFANTEEISAVDNANLKLVGKTFVITGTLPTLKRDEAKALIQKAGGKITESVSKKTDYLVVGEDAGSKLEKAQTLGIKQLSEAELLKILA.

NAD(+)-binding positions include 35–39, 84–85, and Glu115; these read DAVYD and SL. Lys117 acts as the N6-AMP-lysine intermediate in catalysis. NAD(+)-binding residues include Arg138, Glu177, Lys296, and Lys320. Zn(2+)-binding residues include Cys414, Cys417, Cys432, and Cys437. The BRCT domain maps to 599-676; that stretch reads NANLKLVGKT…SEAELLKILA (78 aa).

Belongs to the NAD-dependent DNA ligase family. LigA subfamily. It depends on Mg(2+) as a cofactor. Mn(2+) is required as a cofactor.

The enzyme catalyses NAD(+) + (deoxyribonucleotide)n-3'-hydroxyl + 5'-phospho-(deoxyribonucleotide)m = (deoxyribonucleotide)n+m + AMP + beta-nicotinamide D-nucleotide.. Functionally, DNA ligase that catalyzes the formation of phosphodiester linkages between 5'-phosphoryl and 3'-hydroxyl groups in double-stranded DNA using NAD as a coenzyme and as the energy source for the reaction. It is essential for DNA replication and repair of damaged DNA. The sequence is that of DNA ligase from Trichormus variabilis (strain ATCC 29413 / PCC 7937) (Anabaena variabilis).